Reading from the N-terminus, the 290-residue chain is 4-hydroxy-tetrahydrodipicolinate synthase (290 aa).

Thr-44 is a pyruvate binding site. Tyr-132 acts as the Proton donor/acceptor in catalysis. Lys-160 functions as the Schiff-base intermediate with substrate in the catalytic mechanism. Pyruvate is bound at residue Ile-202.

The protein belongs to the DapA family. As to quaternary structure, homotetramer; dimer of dimers.

The protein localises to the cytoplasm. The enzyme catalyses L-aspartate 4-semialdehyde + pyruvate = (2S,4S)-4-hydroxy-2,3,4,5-tetrahydrodipicolinate + H2O + H(+). It functions in the pathway amino-acid biosynthesis; L-lysine biosynthesis via DAP pathway; (S)-tetrahydrodipicolinate from L-aspartate: step 3/4. In terms of biological role, catalyzes the condensation of (S)-aspartate-beta-semialdehyde [(S)-ASA] and pyruvate to 4-hydroxy-tetrahydrodipicolinate (HTPA). In Geobacter sulfurreducens (strain ATCC 51573 / DSM 12127 / PCA), this protein is 4-hydroxy-tetrahydrodipicolinate synthase.